We begin with the raw amino-acid sequence, 645 residues long: Glucans biosynthesis glucosyltransferase H (645 aa).

The tract at residues 1-28 (MDGTVTLSPAPTDLPPVSSLDAGQPTLP) is disordered. Helical transmembrane passes span 64 to 84 (LIGG…SVLW), 98 to 118 (LFVL…AGFI), 423 to 443 (APMW…GAGI), 465 to 485 (AIWI…LGYI), 504 to 524 (ALSI…VMYL), 558 to 578 (SYGG…LVSP), and 580 to 600 (LAAW…VVAV).

This sequence belongs to the glycosyltransferase 2 family. OpgH subfamily.

The protein localises to the cell inner membrane. It participates in glycan metabolism; osmoregulated periplasmic glucan (OPG) biosynthesis. Involved in the biosynthesis of osmoregulated periplasmic glucans (OPGs). This chain is Glucans biosynthesis glucosyltransferase H, found in Xanthomonas campestris pv. campestris (strain 8004).